A 407-amino-acid chain; its full sequence is Argininosuccinate synthase (407 aa).

Residues 11–19 (AYSGGLDTS) and Ala-39 each bind ATP. L-citrulline is bound by residues Tyr-90 and Ser-95. Gly-120 contacts ATP. Thr-122, Asn-126, and Asp-127 together coordinate L-aspartate. Asn-126 contributes to the L-citrulline binding site. L-citrulline is bound by residues Arg-130, Ser-179, Ser-188, Glu-264, and Tyr-276.

The protein belongs to the argininosuccinate synthase family. Type 1 subfamily. As to quaternary structure, homotetramer.

The protein localises to the cytoplasm. It catalyses the reaction L-citrulline + L-aspartate + ATP = 2-(N(omega)-L-arginino)succinate + AMP + diphosphate + H(+). Its pathway is amino-acid biosynthesis; L-arginine biosynthesis; L-arginine from L-ornithine and carbamoyl phosphate: step 2/3. In Roseiflexus sp. (strain RS-1), this protein is Argininosuccinate synthase.